A 394-amino-acid polypeptide reads, in one-letter code: NAD(P)H-quinone oxidoreductase subunit H (394 aa).

It belongs to the complex I 49 kDa subunit family. As to quaternary structure, NDH-1 can be composed of about 15 different subunits; different subcomplexes with different compositions have been identified which probably have different functions.

It localises to the cellular thylakoid membrane. It catalyses the reaction a plastoquinone + NADH + (n+1) H(+)(in) = a plastoquinol + NAD(+) + n H(+)(out). The enzyme catalyses a plastoquinone + NADPH + (n+1) H(+)(in) = a plastoquinol + NADP(+) + n H(+)(out). In terms of biological role, NDH-1 shuttles electrons from an unknown electron donor, via FMN and iron-sulfur (Fe-S) centers, to quinones in the respiratory and/or the photosynthetic chain. The immediate electron acceptor for the enzyme in this species is believed to be plastoquinone. Couples the redox reaction to proton translocation, and thus conserves the redox energy in a proton gradient. Cyanobacterial NDH-1 also plays a role in inorganic carbon-concentration. This Prochlorococcus marinus (strain NATL1A) protein is NAD(P)H-quinone oxidoreductase subunit H.